We begin with the raw amino-acid sequence, 450 residues long: Saccharopine dehydrogenase [NADP(+), L-glutamate-forming] (450 aa).

NADP(+)-binding positions include 9–12 (SGFV), 32–34 (CRT), 54–55 (DV), Ile75, 97–98 (TS), 124–126 (VDP), and Ser174. Residues 98–99 (SY) and Asp125 contribute to the L-saccharopine site. L-saccharopine is bound by residues Arg223 and 244–246 (TLR).

The protein belongs to the saccharopine dehydrogenase family. Homodimer.

Its subcellular location is the cytoplasm. The catalysed reaction is L-saccharopine + NADP(+) + H2O = (S)-2-amino-6-oxohexanoate + L-glutamate + NADPH + H(+). It functions in the pathway amino-acid biosynthesis; L-lysine biosynthesis via AAA pathway; L-lysine from L-alpha-aminoadipate (fungal route): step 2/3. In Schizosaccharomyces pombe (strain 972 / ATCC 24843) (Fission yeast), this protein is Saccharopine dehydrogenase [NADP(+), L-glutamate-forming].